Reading from the N-terminus, the 279-residue chain is Probable endonuclease 4 (279 aa).

His66, His106, Glu142, Asp176, His179, His213, Asp226, His228, and Glu258 together coordinate Zn(2+).

The protein belongs to the AP endonuclease 2 family. Zn(2+) serves as cofactor.

It catalyses the reaction Endonucleolytic cleavage to 5'-phosphooligonucleotide end-products.. Endonuclease IV plays a role in DNA repair. It cleaves phosphodiester bonds at apurinic or apyrimidinic (AP) sites, generating a 3'-hydroxyl group and a 5'-terminal sugar phosphate. The chain is Probable endonuclease 4 from Photobacterium profundum (strain SS9).